The sequence spans 360 residues: Probable cinnamyl alcohol dehydrogenase 9 (360 aa).

Residue C50 participates in Zn(2+) binding. NADP(+) is bound at residue T52. The Zn(2+) site is built by H72, E73, C103, C106, C109, C117, and C166. Residues T170, 191-196 (GLGGLG), 214-219 (SSSSTK), T254, G278, and 301-303 (SDV) each bind NADP(+).

This sequence belongs to the zinc-containing alcohol dehydrogenase family. Homodimer. The cofactor is Zn(2+). In terms of tissue distribution, expressed in the vasculature of the primary root and elongation regions. Expressed in the hypocotyl, cotyledon veins, vasculature of the first rosette leaves, and hydathodes. In stems, expressed in the vascular cambium, interfascicular cambium, developing xylem, and phloem. Expressed in the entire floral organs at late developing stage, and in the abscission, style and stigmatic regions of siliques and seed funicules.

The enzyme catalyses (E)-cinnamyl alcohol + NADP(+) = (E)-cinnamaldehyde + NADPH + H(+). The protein operates within aromatic compound metabolism; phenylpropanoid biosynthesis. Involved in lignin biosynthesis. May catalyze the final step specific for the production of lignin monomers, like coniferyl alcohol, sinapyl alcohol and 4-coumaryl alcohol. The protein is Probable cinnamyl alcohol dehydrogenase 9 (CAD9) of Arabidopsis thaliana (Mouse-ear cress).